Consider the following 125-residue polypeptide: uncharacterized protein (125 aa).

Residues 50–73 are disordered; it reads QTSDFSDESSRSDSSSVTNENEVS.

This is an uncharacterized protein from Microplitis demolitor (Parasitoid wasp).